The primary structure comprises 153 residues: Deoxyuridine 5'-triphosphate nucleotidohydrolase (153 aa).

Residues 71 to 73 (RSG), Asn84, 88 to 90 (TID), and Lys98 each bind substrate.

This sequence belongs to the dUTPase family. The cofactor is Mg(2+).

The enzyme catalyses dUTP + H2O = dUMP + diphosphate + H(+). It participates in pyrimidine metabolism; dUMP biosynthesis; dUMP from dCTP (dUTP route): step 2/2. Its function is as follows. This enzyme is involved in nucleotide metabolism: it produces dUMP, the immediate precursor of thymidine nucleotides and it decreases the intracellular concentration of dUTP so that uracil cannot be incorporated into DNA. This chain is Deoxyuridine 5'-triphosphate nucleotidohydrolase, found in Wolbachia sp. subsp. Drosophila simulans (strain wRi).